Consider the following 434-residue polypeptide: Rubisco accumulation factor 1.1, chloroplastic (434 aa).

A chloroplast-targeting transit peptide spans M1–K51. The N-terminal alpha-helix stretch occupies residues I65–L254. Residues V273–P419 form a C-terminal beta sheet region.

Belongs to the RAF family. Homodimer.

The protein resides in the plastid. The protein localises to the chloroplast. Required for assembly or stability of RuBisCO. Acts at a postchaperonin step to fold and/or assemble the large subunit (rbcL) into RuBisCO. RAF1 binds first to a rbcL dimer (rbcL(2)), leading to a rbcL(8)-RAF1(4) complex formation. In the next step, RBCS displaces RAF1, thus resulting in holoenzyme formation. This chain is Rubisco accumulation factor 1.1, chloroplastic, found in Arabidopsis thaliana (Mouse-ear cress).